The sequence spans 541 residues: Metal transporter Nramp6 (541 aa).

Low complexity predominate over residues Met1–Pro18. The tract at residues Met1–Ala44 is disordered. The next 12 membrane-spanning stretches (helical) occupy residues Leu87–Leu107, Thr120–Ala140, Val172–Leu192, Phe196–Leu216, Leu224–Thr244, Ala270–Val290, Ile316–Phe336, Phe358–Gln378, Ile404–Phe424, Trp436–Val456, Val474–Phe494, and Leu502–Ile522.

It belongs to the NRAMP (TC 2.A.55) family.

The protein resides in the membrane. Its function is as follows. Probable metal transporter. The protein is Metal transporter Nramp6 (NRAMP6) of Oryza sativa subsp. japonica (Rice).